The primary structure comprises 578 residues: Phosphoenolpyruvate-protein phosphotransferase (578 aa).

H195 acts as the Tele-phosphohistidine intermediate in catalysis. R302 and R338 together coordinate phosphoenolpyruvate. Mg(2+)-binding residues include E437 and D461. Phosphoenolpyruvate contacts are provided by residues 460–461 and R471; that span reads ND. C508 serves as the catalytic Proton donor.

The protein belongs to the PEP-utilizing enzyme family. As to quaternary structure, homodimer. The cofactor is Mg(2+).

Its subcellular location is the cytoplasm. The enzyme catalyses L-histidyl-[protein] + phosphoenolpyruvate = N(pros)-phospho-L-histidyl-[protein] + pyruvate. Functionally, general (non sugar-specific) component of the phosphoenolpyruvate-dependent sugar phosphotransferase system (sugar PTS). This major carbohydrate active-transport system catalyzes the phosphorylation of incoming sugar substrates concomitantly with their translocation across the cell membrane. Enzyme I transfers the phosphoryl group from phosphoenolpyruvate (PEP) to the phosphoryl carrier protein (HPr). This chain is Phosphoenolpyruvate-protein phosphotransferase (ptsI), found in Geobacillus stearothermophilus (Bacillus stearothermophilus).